Consider the following 309-residue polypeptide: Uricase-2 isozyme 1 (309 aa).

Catalysis depends on charge relay system residues Lys-18 and Thr-64. Residues Thr-64, Asp-65, Phe-166, Arg-183, Val-238, Gln-239, and Asn-265 each coordinate urate. The active-site Charge relay system is the His-267. Positions Ser-307–Leu-309 match the Microbody targeting signal motif.

Belongs to the uricase family. As to quaternary structure, homotetramer. The N-terminus is blocked. In terms of tissue distribution, expressed predominantly in the uninfected cells of the central tissue of the root nodule.

Its subcellular location is the peroxisome. It catalyses the reaction urate + O2 + H2O = 5-hydroxyisourate + H2O2. It participates in purine metabolism; urate degradation; (S)-allantoin from urate: step 1/3. Catalyzes the oxidation of uric acid to 5-hydroxyisourate, which is further processed to form (S)-allantoin. This Glycine max (Soybean) protein is Uricase-2 isozyme 1.